Reading from the N-terminus, the 393-residue chain is Bone morphogenetic protein 2 (393 aa).

Positions 1–19 are cleaved as a signal peptide; that stretch reads MVAGTRCLLVLLLPQVLLG. Residues 20–279 constitute a propeptide, cleaved by PCSK5; the sequence is GAAGLIPELG…GHPLHKREKR (260 aa). Serine 85 carries the phosphoserine modification. N-linked (GlcNAc...) asparagine glycosylation is found at asparagine 133, asparagine 161, and asparagine 197. Positions 268–290 are disordered; sequence GKGHPLHKREKRQAKHKQRKRLK. Residues 271–290 show a composition bias toward basic residues; that stretch reads HPLHKREKRQAKHKQRKRLK. Disulfide bonds link cysteine 293-cysteine 358, cysteine 322-cysteine 390, and cysteine 326-cysteine 392. Asparagine 335 carries N-linked (GlcNAc...) asparagine glycosylation.

Belongs to the TGF-beta family. Homodimer; disulfide-linked. Interacts with SOSTDC1. Interacts with GREM2, RGMA, RGMB and RGMC. Interacts with ASPN. Interacts with MAFP5. Interacts with FBN1 (via N-terminal domain) and FBN2. Interacts with type I receptor BMPR1A. Interacts with type II receptor BMPR2. Interacts with SCUBE3. Interacts with TNFAIP6 (primarily via Link domain); this interaction is inhibited by hyaluronan. Interacts with ERFE. Interacts with BMPR1A/ALK3; the interaction may induce HAMP expression. Forms heterodimers with BMP6 in vitro; the heterodimer then binds to its receptor BMPR1A /ALK3 and may induce HAMP expression. Interacts with TGFBR3. As to expression, expressed in femur, calvaria, trachea, lung and ovary.

It is found in the secreted. Its function is as follows. Growth factor of the TGF-beta superfamily that plays essential roles in many developmental processes, including cardiogenesis, neurogenesis, and osteogenesis. Induces cartilage and bone formation. Initiates the canonical BMP signaling cascade by associating with type I receptor BMPR1A and type II receptor BMPR2. Once all three components are bound together in a complex at the cell surface, BMPR2 phosphorylates and activates BMPR1A. In turn, BMPR1A propagates signal by phosphorylating SMAD1/5/8 that travel to the nucleus and act as activators and repressors of transcription of target genes. Also acts to promote expression of HAMP, via the interaction with its receptor BMPR1A/ALK3. Can also signal through non-canonical pathways such as ERK/MAP kinase signaling cascade that regulates osteoblast differentiation. Also stimulates the differentiation of myoblasts into osteoblasts via the EIF2AK3-EIF2A-ATF4 pathway by stimulating EIF2A phosphorylation which leads to increased expression of ATF4 which plays a central role in osteoblast differentiation. Acts as a positive regulator of odontoblast differentiation during mesenchymal tooth germ formation, expression is repressed during the bell stage by MSX1-mediated inhibition of CTNNB1 signaling. In Rattus norvegicus (Rat), this protein is Bone morphogenetic protein 2 (Bmp2).